The following is a 402-amino-acid chain: MVMTQRIAVLGATGSIGDSTLAILAAQPQHYDVYALSGYHRLDKLLALCQQFAPKRVGVPTAAVDEFAKRLSEAGLDIEVVGGETGLVDIATDSQTDTVVAAIVGAAGLPSTLAAARAGKRILLANKEALVMAGQVMINAVKTHHATLLPLDSEHNAIFQCLPFAIQQDNTQIHRLNHGVRKLWLTASGGPFLQQSFTQMQQASVAEAVKHPNWSMGQKISVDSATMMNKGLELIEACHLFDLPENKINVVIHPQSIIHSMVEYSDGSFLAQLGSPDMKTPIAHALSYPDRIDSGSQPLDLFALSGLEFIEPDLQKFACLRLAREAMQTGTHATIILNAANEIAVSAFLNNQIRLTDIADINEQALNEIQVSALTETADIDEILAIDNLARQHTEKLVARLV.

Positions 13, 14, 15, 16, and 126 each coordinate NADPH. Residue Lys-127 coordinates 1-deoxy-D-xylulose 5-phosphate. Position 128 (Glu-128) interacts with NADPH. A Mn(2+)-binding site is contributed by Asp-152. Residues Ser-153, Glu-154, Ser-188, and His-211 each contribute to the 1-deoxy-D-xylulose 5-phosphate site. Glu-154 is a Mn(2+) binding site. Residue Gly-217 coordinates NADPH. 4 residues coordinate 1-deoxy-D-xylulose 5-phosphate: Ser-224, Asn-229, Lys-230, and Glu-233. Glu-233 is a Mn(2+) binding site.

Belongs to the DXR family. Mg(2+) is required as a cofactor. Requires Mn(2+) as cofactor.

It carries out the reaction 2-C-methyl-D-erythritol 4-phosphate + NADP(+) = 1-deoxy-D-xylulose 5-phosphate + NADPH + H(+). Its pathway is isoprenoid biosynthesis; isopentenyl diphosphate biosynthesis via DXP pathway; isopentenyl diphosphate from 1-deoxy-D-xylulose 5-phosphate: step 1/6. Its function is as follows. Catalyzes the NADPH-dependent rearrangement and reduction of 1-deoxy-D-xylulose-5-phosphate (DXP) to 2-C-methyl-D-erythritol 4-phosphate (MEP). The sequence is that of 1-deoxy-D-xylulose 5-phosphate reductoisomerase from Psychrobacter cryohalolentis (strain ATCC BAA-1226 / DSM 17306 / VKM B-2378 / K5).